A 376-amino-acid chain; its full sequence is Peroxisomal membrane protein PEX14 (376 aa).

The segment covering 1–12 (MASSEQAEQPNQ) has biased composition (polar residues). The tract at residues 1–24 (MASSEQAEQPNQPSSPPGSENVVP) is disordered. Position 2 is an N-acetylalanine (A2). The Peroxisomal segment spans residues 2 to 108 (ASSEQAEQPN…YSPRGSRWRD (107 aa)). Position 34 is an N6-acetyllysine (K34). A disordered region spans residues 70–102 (SGTAADEPSPLGPATPVVPVQPPHLTPQPYSPR). The segment covering 88–99 (PVQPPHLTPQPY) has biased composition (pro residues). A helical membrane pass occupies residues 109–127 (YGALAIIMAGIAFGFHQLY). Residues 128 to 376 (KRYLLPLILG…EGASNETERD (249 aa)) are Cytoplasmic-facing. Residues 230-376 (PPSPSAPKIP…EGASNETERD (147 aa)) are disordered. A Phosphoserine modification is found at S232. 2 stretches are compositionally biased toward low complexity: residues 247 to 259 (SSSPSSPAAVNHH) and 265 to 275 (SPVSNESTSSS). Residues S282 and S334 each carry the phosphoserine modification. Residues 323-341 (KEDEDDEDDDVSHVDEEDV) show a composition bias toward acidic residues. Positions 359–376 (QVEKLRRPEGASNETERD) are enriched in basic and acidic residues.

This sequence belongs to the peroxin-14 family. In terms of assembly, interacts with PEX13; forming the PEX13-PEX14 docking complex. Interacts with PEX5 (via WxxxF/Y motifs). Interacts with PEX19. Interacts with tubulin.

It localises to the peroxisome membrane. Component of the PEX13-PEX14 docking complex, a translocon channel that specifically mediates the import of peroxisomal cargo proteins bound to PEX5 receptor. The PEX13-PEX14 docking complex forms a large import pore which can be opened to a diameter of about 9 nm. Mechanistically, PEX5 receptor along with cargo proteins associates with the PEX14 subunit of the PEX13-PEX14 docking complex in the cytosol, leading to the insertion of the receptor into the organelle membrane with the concomitant translocation of the cargo into the peroxisome matrix. Plays a key role for peroxisome movement through a direct interaction with tubulin. The protein is Peroxisomal membrane protein PEX14 of Mus musculus (Mouse).